Reading from the N-terminus, the 546-residue chain is Mercuric reductase (546 aa).

In terms of domain architecture, HMA spans 2-66; sequence NKFKVNISGM…AIDEANYQAG (65 aa). A metal cation is bound by residues Cys13 and Cys16. FAD-binding residues include Ala96, Gly116, and Thr121. Cys122 and Cys127 are joined by a disulfide. Residues Lys131 and Ala195 each contribute to the FAD site. Residues 256-263 and Gly346 contribute to the NAD(+) site; that span reads GSGYIGME. FAD contacts are provided by Asp387 and Val395. The Hg(2+) site is built by Cys543 and Cys544.

This sequence belongs to the class-I pyridine nucleotide-disulfide oxidoreductase family. In terms of assembly, homodimer. Requires FAD as cofactor.

The catalysed reaction is Hg + NADP(+) + H(+) = Hg(2+) + NADPH. With respect to regulation, uses NADPH as the preferred electron donor, but shows slight activity with NADH as well. Inhibited by Cu(2+), Cd(2+), Zn(2+) and Co(2+), with Cu(2+) showing the strongest inhibition. Enzyme activity is enhanced by b-mercaptoethanol and NaCl up to concentrations of 500 uM and 100 mM respectively, followed by inhibition at higher concentrations. Its function is as follows. Resistance to Hg(2+) in bacteria appears to be governed by a specialized system which includes mercuric reductase. MerA protein is responsible for volatilizing mercury as Hg(0). Catalyzes reduction of Hg(2+) to elemental Hg, which is volatile and can diffuse out of cells passively. Plays a pivotal role in mercury resistance and cell protection. The protein is Mercuric reductase of Lysinibacillus sphaericus (Bacillus sphaericus).